Consider the following 318-residue polypeptide: uncharacterized protein (318 aa).

The protein to A.aeolicus AA07 and AA34.

This is an uncharacterized protein from Aquifex aeolicus (strain VF5).